The following is an 81-amino-acid chain: GEAVGLPAQQMGNSEVGHLNLGAGRVVHQSLTYINRKIKDGSFFKNKCFLKVIQHVKTNKSKLHLLGLVSDGGVHSHLDHF.

The active-site Phosphoserine intermediate is S14. S14 is a binding site for Mn(2+). Residue H75 coordinates substrate.

It belongs to the BPG-independent phosphoglycerate mutase family. Monomer. Mn(2+) is required as a cofactor.

The catalysed reaction is (2R)-2-phosphoglycerate = (2R)-3-phosphoglycerate. The protein operates within carbohydrate degradation; glycolysis; pyruvate from D-glyceraldehyde 3-phosphate: step 3/5. Functionally, catalyzes the interconversion of 2-phosphoglycerate and 3-phosphoglycerate. The polypeptide is 2,3-bisphosphoglycerate-independent phosphoglycerate mutase (gpmI) (Tomato big bud phytoplasma).